The primary structure comprises 250 residues: Isoprenyl transferase (250 aa).

The active site involves D26. Mg(2+) is bound at residue D26. Residues 27–30 (GNGR), W31, R39, H43, and 71–73 (STE) contribute to the substrate site. N74 functions as the Proton acceptor in the catalytic mechanism. Residues W75, R77, R198, and 204 to 206 (RLS) contribute to the substrate site. Residue E217 participates in Mg(2+) binding.

It belongs to the UPP synthase family. Homodimer. Requires Mg(2+) as cofactor.

Functionally, catalyzes the condensation of isopentenyl diphosphate (IPP) with allylic pyrophosphates generating different type of terpenoids. This chain is Isoprenyl transferase, found in Streptococcus agalactiae serotype V (strain ATCC BAA-611 / 2603 V/R).